Here is a 376-residue protein sequence, read N- to C-terminus: 1-deoxy-D-xylulose 5-phosphate reductoisomerase (376 aa).

Residues Thr-12, Gly-13, Ser-14, Ile-15, Asn-39, and Asn-116 each contribute to the NADPH site. Residue Lys-117 participates in 1-deoxy-D-xylulose 5-phosphate binding. Glu-118 provides a ligand contact to NADPH. Asp-142 serves as a coordination point for Mn(2+). Positions 143, 144, 164, and 187 each coordinate 1-deoxy-D-xylulose 5-phosphate. Glu-144 contacts Mn(2+). Gly-193 serves as a coordination point for NADPH. The 1-deoxy-D-xylulose 5-phosphate site is built by Ser-200, Asn-205, Lys-206, and Glu-209. Glu-209 contacts Mn(2+).

The protein belongs to the DXR family. Mg(2+) serves as cofactor. The cofactor is Mn(2+).

It carries out the reaction 2-C-methyl-D-erythritol 4-phosphate + NADP(+) = 1-deoxy-D-xylulose 5-phosphate + NADPH + H(+). Its pathway is isoprenoid biosynthesis; isopentenyl diphosphate biosynthesis via DXP pathway; isopentenyl diphosphate from 1-deoxy-D-xylulose 5-phosphate: step 1/6. Its function is as follows. Catalyzes the NADPH-dependent rearrangement and reduction of 1-deoxy-D-xylulose-5-phosphate (DXP) to 2-C-methyl-D-erythritol 4-phosphate (MEP). The chain is 1-deoxy-D-xylulose 5-phosphate reductoisomerase from Thermotoga maritima (strain ATCC 43589 / DSM 3109 / JCM 10099 / NBRC 100826 / MSB8).